Here is a 319-residue protein sequence, read N- to C-terminus: Ornithine carbamoyltransferase (319 aa).

Residues 63-66 (STRT), Q90, R114, and 141-144 (HPCQ) contribute to the carbamoyl phosphate site. Residues N172, D236, and 240–241 (SM) contribute to the L-ornithine site. Residues 276–277 (CL) and R304 contribute to the carbamoyl phosphate site.

This sequence belongs to the aspartate/ornithine carbamoyltransferase superfamily. OTCase family.

The protein localises to the cytoplasm. The catalysed reaction is carbamoyl phosphate + L-ornithine = L-citrulline + phosphate + H(+). It functions in the pathway amino-acid biosynthesis; L-arginine biosynthesis; L-arginine from L-ornithine and carbamoyl phosphate: step 1/3. Reversibly catalyzes the transfer of the carbamoyl group from carbamoyl phosphate (CP) to the N(epsilon) atom of ornithine (ORN) to produce L-citrulline. In Halalkalibacterium halodurans (strain ATCC BAA-125 / DSM 18197 / FERM 7344 / JCM 9153 / C-125) (Bacillus halodurans), this protein is Ornithine carbamoyltransferase.